A 110-amino-acid polypeptide reads, in one-letter code: Large ribosomal subunit protein uL22 (110 aa).

It belongs to the universal ribosomal protein uL22 family. Part of the 50S ribosomal subunit.

This protein binds specifically to 23S rRNA; its binding is stimulated by other ribosomal proteins, e.g. L4, L17, and L20. It is important during the early stages of 50S assembly. It makes multiple contacts with different domains of the 23S rRNA in the assembled 50S subunit and ribosome. In terms of biological role, the globular domain of the protein is located near the polypeptide exit tunnel on the outside of the subunit, while an extended beta-hairpin is found that lines the wall of the exit tunnel in the center of the 70S ribosome. The polypeptide is Large ribosomal subunit protein uL22 (Leptospira interrogans serogroup Icterohaemorrhagiae serovar copenhageni (strain Fiocruz L1-130)).